We begin with the raw amino-acid sequence, 206 residues long: Shieldin complex subunit 1 (206 aa).

The interval 27–94 (SSYEASQRVS…GQLETNEEED (68 aa)) is disordered. Residues 32–55 (SQRVSQGSSNSLSSLESHPFLSSS) show a composition bias toward low complexity. The segment covering 56-74 (TTDPDSNSLNTEQKGSWDS) has biased composition (polar residues).

Component of the shieldin complex, consisting of SHLD1, SHLD2, SHLD3 and MAD2L2/REV7. Within the complex, SHLD2 forms a scaffold which interacts with a SHLD3-MAD2L2 subcomplex via its N-terminus, and with SHLD1 via its C-terminus. Interacts with ASTE1.

The protein resides in the chromosome. Its function is as follows. Component of the shieldin complex, which plays an important role in repair of DNA double-stranded breaks (DSBs). During G1 and S phase of the cell cycle, the complex functions downstream of TP53BP1 to promote non-homologous end joining (NHEJ) and suppress DNA end resection. Mediates various NHEJ-dependent processes including immunoglobulin class-switch recombination, and fusion of unprotected telomeres. This is Shieldin complex subunit 1 from Mus musculus (Mouse).